A 212-amino-acid chain; its full sequence is 3-isopropylmalate dehydratase small subunit (212 aa).

It belongs to the LeuD family. LeuD type 1 subfamily. Heterodimer of LeuC and LeuD.

The enzyme catalyses (2R,3S)-3-isopropylmalate = (2S)-2-isopropylmalate. The protein operates within amino-acid biosynthesis; L-leucine biosynthesis; L-leucine from 3-methyl-2-oxobutanoate: step 2/4. Catalyzes the isomerization between 2-isopropylmalate and 3-isopropylmalate, via the formation of 2-isopropylmaleate. In Thiobacillus denitrificans (strain ATCC 25259 / T1), this protein is 3-isopropylmalate dehydratase small subunit.